A 95-amino-acid polypeptide reads, in one-letter code: CRISPR-associated endoribonuclease Cas2 (95 aa).

D9 provides a ligand contact to Mg(2+).

The protein belongs to the CRISPR-associated endoribonuclease Cas2 protein family. In terms of assembly, homodimer, forms a heterotetramer with a Cas1 homodimer. Mg(2+) serves as cofactor.

In terms of biological role, CRISPR (clustered regularly interspaced short palindromic repeat), is an adaptive immune system that provides protection against mobile genetic elements (viruses, transposable elements and conjugative plasmids). CRISPR clusters contain sequences complementary to antecedent mobile elements and target invading nucleic acids. CRISPR clusters are transcribed and processed into CRISPR RNA (crRNA). Functions as a ssRNA-specific endoribonuclease. Involved in the integration of spacer DNA into the CRISPR cassette. This Methylorubrum extorquens (strain CM4 / NCIMB 13688) (Methylobacterium extorquens) protein is CRISPR-associated endoribonuclease Cas2.